Here is a 668-residue protein sequence, read N- to C-terminus: Alpha-1,4-glucan:maltose-1-phosphate maltosyltransferase (668 aa).

A disordered region spans residues 263 to 288 (RKGRNNSLTPAPDDPGSPYAIGSEEG). Residues Lys264, Gln324, and Asp359 each contribute to the alpha-maltose 1-phosphate site. Asp395 serves as the catalytic Nucleophile. Asn396 serves as a coordination point for alpha-maltose 1-phosphate. Catalysis depends on Glu424, which acts as the Proton donor. An alpha-maltose 1-phosphate-binding site is contributed by 535-536 (KY).

Belongs to the glycosyl hydrolase 13 family. GlgE subfamily. In terms of assembly, homodimer.

It catalyses the reaction alpha-maltose 1-phosphate + [(1-&gt;4)-alpha-D-glucosyl](n) = [(1-&gt;4)-alpha-D-glucosyl](n+2) + phosphate. Functionally, maltosyltransferase that uses maltose 1-phosphate (M1P) as the sugar donor to elongate linear or branched alpha-(1-&gt;4)-glucans. Is involved in a branched alpha-glucan biosynthetic pathway from trehalose, together with TreS, Mak and GlgB. This chain is Alpha-1,4-glucan:maltose-1-phosphate maltosyltransferase, found in Cereibacter sphaeroides (strain ATCC 17023 / DSM 158 / JCM 6121 / CCUG 31486 / LMG 2827 / NBRC 12203 / NCIMB 8253 / ATH 2.4.1.) (Rhodobacter sphaeroides).